Consider the following 463-residue polypeptide: Ribulose bisphosphate carboxylase large chain (463 aa).

Residue K5 is modified to N6,N6,N6-trimethyllysine. 2 residues coordinate substrate: N114 and T164. The active-site Proton acceptor is K166. Residue K168 coordinates substrate. Residues K192, D194, and E195 each contribute to the Mg(2+) site. K192 carries the N6-carboxylysine modification. H285 (proton acceptor) is an active-site residue. Positions 286, 318, and 370 each coordinate substrate.

It belongs to the RuBisCO large chain family. Type I subfamily. Heterohexadecamer of 8 large chains and 8 small chains; disulfide-linked. The disulfide link is formed within the large subunit homodimers. Requires Mg(2+) as cofactor. In terms of processing, the disulfide bond which can form in the large chain dimeric partners within the hexadecamer appears to be associated with oxidative stress and protein turnover.

It localises to the plastid. The protein localises to the chloroplast. It carries out the reaction 2 (2R)-3-phosphoglycerate + 2 H(+) = D-ribulose 1,5-bisphosphate + CO2 + H2O. It catalyses the reaction D-ribulose 1,5-bisphosphate + O2 = 2-phosphoglycolate + (2R)-3-phosphoglycerate + 2 H(+). Functionally, ruBisCO catalyzes two reactions: the carboxylation of D-ribulose 1,5-bisphosphate, the primary event in carbon dioxide fixation, as well as the oxidative fragmentation of the pentose substrate in the photorespiration process. Both reactions occur simultaneously and in competition at the same active site. This chain is Ribulose bisphosphate carboxylase large chain, found in Pelargonium grandiflorum (Geranium).